Here is a 301-residue protein sequence, read N- to C-terminus: Porphobilinogen deaminase (301 aa).

An S-(dipyrrolylmethanemethyl)cysteine modification is found at C242.

Belongs to the HMBS family. Monomer. It depends on dipyrromethane as a cofactor.

The catalysed reaction is 4 porphobilinogen + H2O = hydroxymethylbilane + 4 NH4(+). The protein operates within porphyrin-containing compound metabolism; protoporphyrin-IX biosynthesis; coproporphyrinogen-III from 5-aminolevulinate: step 2/4. Tetrapolymerization of the monopyrrole PBG into the hydroxymethylbilane pre-uroporphyrinogen in several discrete steps. The protein is Porphobilinogen deaminase of Rickettsia canadensis (strain McKiel).